The primary structure comprises 219 residues: Adenylate kinase (219 aa).

Residue 10–15 (GAGKGT) participates in ATP binding. Residues 30–59 (ATGDLFRANISQGTDLGKQARAYMDAGQLV) are NMP. Residues threonine 31, arginine 36, 57 to 59 (QLV), 85 to 88 (GFPR), and glutamine 92 contribute to the AMP site. The interval 126–164 (GRRVCRNNSAHVFHLTYNPPKAEGVCDACGGELYQRDDD) is LID. Residues arginine 127 and 137 to 138 (VF) contribute to the ATP site. Positions 161 and 172 each coordinate AMP. Glycine 200 serves as a coordination point for ATP.

This sequence belongs to the adenylate kinase family. In terms of assembly, monomer.

It localises to the cytoplasm. The catalysed reaction is AMP + ATP = 2 ADP. The protein operates within purine metabolism; AMP biosynthesis via salvage pathway; AMP from ADP: step 1/1. Functionally, catalyzes the reversible transfer of the terminal phosphate group between ATP and AMP. Plays an important role in cellular energy homeostasis and in adenine nucleotide metabolism. The sequence is that of Adenylate kinase from Streptomyces griseus subsp. griseus (strain JCM 4626 / CBS 651.72 / NBRC 13350 / KCC S-0626 / ISP 5235).